The sequence spans 247 residues: DNA polymerase sliding clamp (247 aa).

It belongs to the PCNA family. In terms of assembly, homotrimer. The subunits circularize to form a toroid; DNA passes through its center. Replication factor C (RFC) is required to load the toroid on the DNA.

In terms of biological role, sliding clamp subunit that acts as a moving platform for DNA processing. Responsible for tethering the catalytic subunit of DNA polymerase and other proteins to DNA during high-speed replication. This Methanospirillum hungatei JF-1 (strain ATCC 27890 / DSM 864 / NBRC 100397 / JF-1) protein is DNA polymerase sliding clamp.